Reading from the N-terminus, the 334-residue chain is D-fructose 1,6-bisphosphatase class 2/sedoheptulose 1,7-bisphosphatase (334 aa).

Positions 33, 57, 85, and 88 each coordinate Mn(2+). Residues 88–90 (EGT), tyrosine 119, 164–166 (RAR), and 186–188 (DGD) each bind substrate. Glutamate 213 contributes to the Mn(2+) binding site.

It belongs to the FBPase class 2 family. As to quaternary structure, homotetramer. Mn(2+) is required as a cofactor.

It catalyses the reaction beta-D-fructose 1,6-bisphosphate + H2O = beta-D-fructose 6-phosphate + phosphate. The catalysed reaction is D-sedoheptulose 1,7-bisphosphate + H2O = D-sedoheptulose 7-phosphate + phosphate. It participates in carbohydrate biosynthesis; Calvin cycle. In terms of biological role, catalyzes the hydrolysis of fructose 1,6-bisphosphate (Fru 1,6-P2) and sedoheptulose 1,7-bisphosphate (Sed 1,7-P2) to fructose 6-phosphate and sedoheptulose 7-phosphate, respectively. The chain is D-fructose 1,6-bisphosphatase class 2/sedoheptulose 1,7-bisphosphatase from Prochlorococcus marinus (strain MIT 9303).